Here is a 483-residue protein sequence, read N- to C-terminus: MHQMTLAEIARGLADKKFSSEELTRVLLSRIATLDPQLNSFISLTEDLAITQAQAADARRAAGENGPLLGAPLAHKDLFCTQGIRTSCGSLMLDNFKAPYDATVVSRLASAGTVTLGKTNMDEFAMGSANESSHYGAVKNPWNLECVPGGSSGGSAAAVAARLLPAATGTDTGGSIRQPAALTNLTGLKPTYGRVSRWGMIAYASSLDQAGPMARTAEDCALLLQGMAGFDPQDSTSIDEPVPDYSASLNTSLKGLRIGVPKEYFSAGLDPRIAQLVHESVRELEKLGAIVKEVSLPNLQHAIPAYYVIAPAEASSNLSRFDGVRFGYRCEDPKDLTDLYKRSRAEGFGPEVQRRIMVGAYALSAGYYDAYYLQAQKIRRLIKNDFMNAFADVDVILGPTTPNPAWKIGAKTHDPIAEYLEDFYTITANLAGLPGLSMPAGFVDGLPVGVQLLAPYFQEGRLLNVAHQYQQVTDWHTRAPEGF.

Catalysis depends on charge relay system residues lysine 76 and serine 151. The active-site Acyl-ester intermediate is the serine 175.

Belongs to the amidase family. GatA subfamily. As to quaternary structure, heterotrimer of A, B and C subunits.

It carries out the reaction L-glutamyl-tRNA(Gln) + L-glutamine + ATP + H2O = L-glutaminyl-tRNA(Gln) + L-glutamate + ADP + phosphate + H(+). Functionally, allows the formation of correctly charged Gln-tRNA(Gln) through the transamidation of misacylated Glu-tRNA(Gln) in organisms which lack glutaminyl-tRNA synthetase. The reaction takes place in the presence of glutamine and ATP through an activated gamma-phospho-Glu-tRNA(Gln). The sequence is that of Glutamyl-tRNA(Gln) amidotransferase subunit A from Pseudomonas syringae pv. syringae (strain B728a).